Consider the following 217-residue polypeptide: Cytochrome c biogenesis ATP-binding export protein CcmA (217 aa).

In terms of domain architecture, ABC transporter spans 16–214 (LVLEQLSCER…AHGQAEVTEG (199 aa)). Residue 48–55 (GANGAGKT) coordinates ATP.

The protein belongs to the ABC transporter superfamily. CcmA exporter (TC 3.A.1.107) family. The complex is composed of two ATP-binding proteins (CcmA) and two transmembrane proteins (CcmB).

It localises to the cell inner membrane. It catalyses the reaction heme b(in) + ATP + H2O = heme b(out) + ADP + phosphate + H(+). Its function is as follows. Part of the ABC transporter complex CcmAB involved in the biogenesis of c-type cytochromes; once thought to export heme, this seems not to be the case, but its exact role is uncertain. Responsible for energy coupling to the transport system. The chain is Cytochrome c biogenesis ATP-binding export protein CcmA from Alcanivorax borkumensis (strain ATCC 700651 / DSM 11573 / NCIMB 13689 / SK2).